The chain runs to 594 residues: UvrABC system protein C (594 aa).

In terms of domain architecture, GIY-YIG spans 14–91 (DQPGCYLMKD…IKKHDPKYNI (78 aa)). A UVR domain is found at 196-231 (KEVRSELETKMYEASEKLEFERAKELRDQIAHIDAI).

Belongs to the UvrC family. Interacts with UvrB in an incision complex.

The protein localises to the cytoplasm. Its function is as follows. The UvrABC repair system catalyzes the recognition and processing of DNA lesions. UvrC both incises the 5' and 3' sides of the lesion. The N-terminal half is responsible for the 3' incision and the C-terminal half is responsible for the 5' incision. The polypeptide is UvrABC system protein C (Bacillus cereus (strain AH187)).